A 129-amino-acid chain; its full sequence is Large ribosomal subunit protein eL32 (129 aa).

Belongs to the eukaryotic ribosomal protein eL32 family.

The sequence is that of Large ribosomal subunit protein eL32 (rpl32e) from Archaeoglobus fulgidus (strain ATCC 49558 / DSM 4304 / JCM 9628 / NBRC 100126 / VC-16).